A 91-amino-acid chain; its full sequence is Elongation factor 1-beta (91 aa).

Belongs to the EF-1-beta/EF-1-delta family.

Functionally, promotes the exchange of GDP for GTP in EF-1-alpha/GDP, thus allowing the regeneration of EF-1-alpha/GTP that could then be used to form the ternary complex EF-1-alpha/GTP/AAtRNA. The protein is Elongation factor 1-beta of Pyrococcus furiosus (strain ATCC 43587 / DSM 3638 / JCM 8422 / Vc1).